Reading from the N-terminus, the 64-residue chain is Large ribosomal subunit protein uL30 (64 aa).

A disordered region spans residues 1–22 (MSEQVKRVRVTQVGSPIGRKPG).

This sequence belongs to the universal ribosomal protein uL30 family. Part of the 50S ribosomal subunit.

This Acidiphilium cryptum (strain JF-5) protein is Large ribosomal subunit protein uL30.